The following is a 336-amino-acid chain: Holliday junction branch migration complex subunit RuvB (336 aa).

The large ATPase domain (RuvB-L) stretch occupies residues 4-184 (ADRLISASGG…FGIVQRLEFY (181 aa)). Residues Ile23, Arg24, Gly65, Lys68, Thr69, Thr70, 131–133 (EDY), Arg174, Tyr184, and Arg221 each bind ATP. Residue Thr69 participates in Mg(2+) binding. Residues 185-255 (NVKDLTDIVA…IAARAMDMLD (71 aa)) form a small ATPAse domain (RuvB-S) region. Residues 258-336 (NEGFDFMDRK…HFGLQRPDEG (79 aa)) form a head domain (RuvB-H) region. DNA contacts are provided by Arg313 and Arg318.

Belongs to the RuvB family. As to quaternary structure, homohexamer. Forms an RuvA(8)-RuvB(12)-Holliday junction (HJ) complex. HJ DNA is sandwiched between 2 RuvA tetramers; dsDNA enters through RuvA and exits via RuvB. An RuvB hexamer assembles on each DNA strand where it exits the tetramer. Each RuvB hexamer is contacted by two RuvA subunits (via domain III) on 2 adjacent RuvB subunits; this complex drives branch migration. In the full resolvosome a probable DNA-RuvA(4)-RuvB(12)-RuvC(2) complex forms which resolves the HJ.

It is found in the cytoplasm. The catalysed reaction is ATP + H2O = ADP + phosphate + H(+). The RuvA-RuvB-RuvC complex processes Holliday junction (HJ) DNA during genetic recombination and DNA repair, while the RuvA-RuvB complex plays an important role in the rescue of blocked DNA replication forks via replication fork reversal (RFR). RuvA specifically binds to HJ cruciform DNA, conferring on it an open structure. The RuvB hexamer acts as an ATP-dependent pump, pulling dsDNA into and through the RuvAB complex. RuvB forms 2 homohexamers on either side of HJ DNA bound by 1 or 2 RuvA tetramers; 4 subunits per hexamer contact DNA at a time. Coordinated motions by a converter formed by DNA-disengaged RuvB subunits stimulates ATP hydrolysis and nucleotide exchange. Immobilization of the converter enables RuvB to convert the ATP-contained energy into a lever motion, pulling 2 nucleotides of DNA out of the RuvA tetramer per ATP hydrolyzed, thus driving DNA branch migration. The RuvB motors rotate together with the DNA substrate, which together with the progressing nucleotide cycle form the mechanistic basis for DNA recombination by continuous HJ branch migration. Branch migration allows RuvC to scan DNA until it finds its consensus sequence, where it cleaves and resolves cruciform DNA. This is Holliday junction branch migration complex subunit RuvB from Aeromonas hydrophila subsp. hydrophila (strain ATCC 7966 / DSM 30187 / BCRC 13018 / CCUG 14551 / JCM 1027 / KCTC 2358 / NCIMB 9240 / NCTC 8049).